The primary structure comprises 461 residues: Piperine synthase (461 aa).

Residues His168 and Asp387 each act as proton acceptor in the active site. The Microbody targeting signal motif lies at 459 to 461; the sequence is SRM.

This sequence belongs to the plant acyltransferase family. As to quaternary structure, monomer. As to expression, confined to immature fruits perisperm. Also detectable in roots.

The protein localises to the cytoplasm. It catalyses the reaction piperidine + (E,E)-piperoyl-CoA = piperine + CoA + H(+). The enzyme catalyses pyrrolidine + (E,E)-piperoyl-CoA = piperyline + CoA + H(+). The catalysed reaction is (E,E)-piperoyl-CoA + 2-methylpropan-1-amine = (E,E)-piperlonguminine + CoA + H(+). Its pathway is aromatic compound metabolism. Its function is as follows. Involved in the biosynthesis of aromatic piperamides natural products such as piperine (1-piperoyl-piperidine), the pungent principle contributing, together with several terpenoids, to the aromatic properties of black pepper fruits, and displaying numerous pharmacological activities such as antiproliferative, antitumor, antiangiogenesis, antioxidant, antidiabetic, antiobesity, cardioprotective, antimicrobial, antiaging, and immunomodulatory effects. Mediates mainly the conversion of piperidine and piperoyl-CoA to piperine. Can also use pyrrolidine and isobutylamine as acceptors and 3,4-methylenedioxycinnamoyl-CoA as an alternative CoA-donor with a lower efficiency. In Piper nigrum (Black pepper), this protein is Piperine synthase.